The primary structure comprises 62 residues: UPF0291 protein CLI_2672 (62 aa).

This sequence belongs to the UPF0291 family.

It is found in the cytoplasm. In Clostridium botulinum (strain Langeland / NCTC 10281 / Type F), this protein is UPF0291 protein CLI_2672.